Consider the following 263-residue polypeptide: Syntaxin-73 (263 aa).

Over 1-240 (MGVIDLITRV…TVTKLRSSRN (240 aa)) the chain is Cytoplasmic. Ser12 is modified (phosphoserine). Positions 169-231 (YEMKRIKQAR…KSTNVRLKDT (63 aa)) constitute a t-SNARE coiled-coil homology domain. The chain crosses the membrane as a helical; Anchor for type IV membrane protein span at residues 241–261 (FCIDIILLCILLGIAAFIYNS). The Vesicular portion of the chain corresponds to 262–263 (VK).

This sequence belongs to the syntaxin family. Part of the t-SNARE complex. As to expression, expressed in root, leaf, stem, flower and silique.

It is found in the membrane. Vesicle trafficking protein that functions in the secretory pathway. This Arabidopsis thaliana (Mouse-ear cress) protein is Syntaxin-73 (SYP73).